Reading from the N-terminus, the 153-residue chain is Probable succinate transporter subunit YjjB (153 aa).

Transmembrane regions (helical) follow at residues 7-27 (WALL…AMVF), 51-71 (MIHF…MIGI), 83-103 (VFTV…TAMI), and 125-145 (FLKA…PGLW).

The protein belongs to the ThrE exporter (TC 2.A.79) family. The transporter is composed of YjjB and YjjP.

The protein resides in the cell inner membrane. Involved in succinate export with YjjP. Both proteins are required for export. This chain is Probable succinate transporter subunit YjjB, found in Yersinia pestis bv. Antiqua (strain Antiqua).